The primary structure comprises 650 residues: Probable protein phosphatase 2C 36 (650 aa).

The disordered stretch occupies residues 146-166 (SGKKTKEKAKLKKSGSKSFTK). Residues 148-166 (KKTKEKAKLKKSGSKSFTK) are compositionally biased toward basic residues. The PPM-type phosphatase domain occupies 239-641 (ESALEEPKIQ…DDVSVIVISL (403 aa)). Residues D276, G277, D569, and D632 each coordinate Mn(2+).

The protein belongs to the PP2C family. It depends on Mg(2+) as a cofactor. Mn(2+) is required as a cofactor.

The protein resides in the nucleus. The enzyme catalyses O-phospho-L-seryl-[protein] + H2O = L-seryl-[protein] + phosphate. It catalyses the reaction O-phospho-L-threonyl-[protein] + H2O = L-threonyl-[protein] + phosphate. This chain is Probable protein phosphatase 2C 36 (PLL3), found in Arabidopsis thaliana (Mouse-ear cress).